The chain runs to 103 residues: MSLSEQAILEQDKNIVSNIVQDILCEQISIEKTELNLDLYIYEDLKIDSLDLVEIIKQIEEKFDIKIDDSKILYMNTLEEFIDFTLQTIYMKHGFEYLQNKQF.

Residues 14–89 enclose the Carrier domain; it reads NIVSNIVQDI…EFIDFTLQTI (76 aa). O-(pantetheine 4'-phosphoryl)serine is present on S49.

This sequence belongs to the acyl carrier protein (ACP) family. Post-translationally, 4'-phosphopantetheine is transferred from CoA to a specific serine of apo-ACP by AcpS. This modification is essential for activity because fatty acids are bound in thioester linkage to the sulfhydryl of the prosthetic group.

The protein resides in the plastid. The protein localises to the cyanelle. It functions in the pathway lipid metabolism; fatty acid biosynthesis. In terms of biological role, carrier of the growing fatty acid chain in fatty acid biosynthesis. The polypeptide is Acyl carrier protein (Cyanophora paradoxa).